Reading from the N-terminus, the 525-residue chain is GMP synthase [glutamine-hydrolyzing] (525 aa).

Residues 8–206 enclose the Glutamine amidotransferase type-1 domain; sequence PLLILDFGSQ…VVDICKASTD (199 aa). Cys85 serves as the catalytic Nucleophile. Residues His180 and Glu182 contribute to the active site. Residues 207–400 form the GMPS ATP-PPase domain; it reads WTPEHIIDEA…LGLPHDMVYR (194 aa). Residue 234–240 participates in ATP binding; sequence SGGVDSS.

Homodimer.

The catalysed reaction is XMP + L-glutamine + ATP + H2O = GMP + L-glutamate + AMP + diphosphate + 2 H(+). It functions in the pathway purine metabolism; GMP biosynthesis; GMP from XMP (L-Gln route): step 1/1. Functionally, catalyzes the synthesis of GMP from XMP. This Legionella pneumophila subsp. pneumophila (strain Philadelphia 1 / ATCC 33152 / DSM 7513) protein is GMP synthase [glutamine-hydrolyzing].